Reading from the N-terminus, the 92-residue chain is Cell division protein FtsB (92 aa).

Residues 1 to 3 (MRL) are Cytoplasmic-facing. A helical membrane pass occupies residues 4–21 (FIFLLVAVLLLFQYDFWF). Over 22–92 (GKNGYLDYKR…IFYHIVKEQK (71 aa)) the chain is Periplasmic. Residues 26–74 (YLDYKRTAQQIAQHKQENEKLSQRNQVVAAEIKDLKQGVEAIEERARFQ) adopt a coiled-coil conformation.

Belongs to the FtsB family. Part of a complex composed of FtsB, FtsL and FtsQ.

Its subcellular location is the cell inner membrane. Essential cell division protein. May link together the upstream cell division proteins, which are predominantly cytoplasmic, with the downstream cell division proteins, which are predominantly periplasmic. The sequence is that of Cell division protein FtsB from Pasteurella multocida (strain Pm70).